We begin with the raw amino-acid sequence, 129 residues long: uncharacterized protein (129 aa).

The HIT domain occupies 3–109 (IFCKIINGEI…IPRYEGDGEV (107 aa)). The Histidine triad motif motif lies at 94 to 98 (HVHFH).

This is an uncharacterized protein from Methanocaldococcus jannaschii (strain ATCC 43067 / DSM 2661 / JAL-1 / JCM 10045 / NBRC 100440) (Methanococcus jannaschii).